The sequence spans 302 residues: Urease accessory protein UreD 2 (302 aa).

The protein belongs to the UreD family. As to quaternary structure, ureD, UreF and UreG form a complex that acts as a GTP-hydrolysis-dependent molecular chaperone, activating the urease apoprotein by helping to assemble the nickel containing metallocenter of UreC. The UreE protein probably delivers the nickel.

Its subcellular location is the cytoplasm. Its function is as follows. Required for maturation of urease via the functional incorporation of the urease nickel metallocenter. The sequence is that of Urease accessory protein UreD 2 from Brucella melitensis biotype 1 (strain ATCC 23456 / CCUG 17765 / NCTC 10094 / 16M).